We begin with the raw amino-acid sequence, 305 residues long: Protein-methionine-sulfoxide reductase catalytic subunit MsrP (305 aa).

The tat-type signal signal peptide spans 1 to 54; that stretch reads MLIRKPADHLPSEITSESVYFNRRQFMAGAAGLLLSAETLAGLAAKKSPLSQLA. Mo-molybdopterin is bound by residues asparagine 69, 72 to 73, cysteine 126, threonine 161, asparagine 209, arginine 214, and 225 to 227; these read YE and SIK.

The protein belongs to the MsrP family. As to quaternary structure, heterodimer of a catalytic subunit (MsrP) and a heme-binding subunit (MsrQ). Mo-molybdopterin is required as a cofactor. Predicted to be exported by the Tat system. The position of the signal peptide cleavage has not been experimentally proven.

It localises to the periplasm. It carries out the reaction L-methionyl-[protein] + a quinone + H2O = L-methionyl-(S)-S-oxide-[protein] + a quinol. The catalysed reaction is L-methionyl-[protein] + a quinone + H2O = L-methionyl-(R)-S-oxide-[protein] + a quinol. Part of the MsrPQ system that repairs oxidized periplasmic proteins containing methionine sulfoxide residues (Met-O), using respiratory chain electrons. Thus protects these proteins from oxidative-stress damage caused by reactive species of oxygen and chlorine generated by the host defense mechanisms. MsrPQ is essential for the maintenance of envelope integrity under bleach stress, rescuing a wide series of structurally unrelated periplasmic proteins from methionine oxidation. The catalytic subunit MsrP is non-stereospecific, being able to reduce both (R-) and (S-) diastereoisomers of methionine sulfoxide. The polypeptide is Protein-methionine-sulfoxide reductase catalytic subunit MsrP (Chromobacterium violaceum (strain ATCC 12472 / DSM 30191 / JCM 1249 / CCUG 213 / NBRC 12614 / NCIMB 9131 / NCTC 9757 / MK)).